Consider the following 435-residue polypeptide: uncharacterized protein (435 aa).

Positions 261, 294, 318, and 366 each coordinate S-adenosyl-L-methionine. Catalysis depends on C393, which acts as the Nucleophile.

This sequence belongs to the class I-like SAM-binding methyltransferase superfamily. RNA M5U methyltransferase family.

This is an uncharacterized protein from Bifidobacterium longum (strain NCC 2705).